Consider the following 123-residue polypeptide: Venom protein 29 (123 aa).

The signal sequence occupies residues 1–18; it reads MNKLFLFTLLVTLWSVKG.

In terms of processing, contains 3 disulfide bonds. In terms of tissue distribution, expressed by the venom gland.

The protein resides in the secreted. This chain is Venom protein 29, found in Lychas mucronatus (Chinese swimming scorpion).